Reading from the N-terminus, the 206-residue chain is HTH-type transcriptional regulator Hpr (206 aa).

The region spanning alanine 13–glycine 157 is the HTH marR-type domain. Positions isoleucine 63–glutamate 86 form a DNA-binding region, H-T-H motif. The segment at serine 177–asparagine 206 is disordered. Residues glutamate 178–asparagine 206 are compositionally biased toward basic and acidic residues.

As to quaternary structure, homodimer.

Functionally, negative regulator of protease production and sporulation. The protein is HTH-type transcriptional regulator Hpr of Bacillus licheniformis (strain ATCC 14580 / DSM 13 / JCM 2505 / CCUG 7422 / NBRC 12200 / NCIMB 9375 / NCTC 10341 / NRRL NRS-1264 / Gibson 46).